A 609-amino-acid polypeptide reads, in one-letter code: Membrane protein insertase YidC (609 aa).

Transmembrane regions (helical) follow at residues 8–28 (LILA…LFPP), 381–401 (MGWS…PLAL), 451–471 (LPIL…FVTI), 509–529 (SLTA…SMWL), and 545–565 (IFAW…SGLV).

Belongs to the OXA1/ALB3/YidC family. Type 1 subfamily. In terms of assembly, interacts with the Sec translocase complex via SecD. Specifically interacts with transmembrane segments of nascent integral membrane proteins during membrane integration.

The protein resides in the cell inner membrane. Functionally, required for the insertion and/or proper folding and/or complex formation of integral membrane proteins into the membrane. Involved in integration of membrane proteins that insert both dependently and independently of the Sec translocase complex, as well as at least some lipoproteins. Aids folding of multispanning membrane proteins. In Ruegeria pomeroyi (strain ATCC 700808 / DSM 15171 / DSS-3) (Silicibacter pomeroyi), this protein is Membrane protein insertase YidC.